Here is a 379-residue protein sequence, read N- to C-terminus: tRNA-specific 2-thiouridylase MnmA (379 aa).

ATP contacts are provided by residues 9–16 (AMSGGVDS) and Met-35. Residues 94–96 (NPD) form an interaction with target base in tRNA region. Cys-99 serves as the catalytic Nucleophile. The cysteines at positions 99 and 195 are disulfide-linked. Gly-123 serves as a coordination point for ATP. Residues 145–147 (KDQ) form an interaction with tRNA region. Cys-195 functions as the Cysteine persulfide intermediate in the catalytic mechanism. The interval 307–308 (RY) is interaction with tRNA.

This sequence belongs to the MnmA/TRMU family.

It is found in the cytoplasm. The catalysed reaction is S-sulfanyl-L-cysteinyl-[protein] + uridine(34) in tRNA + AH2 + ATP = 2-thiouridine(34) in tRNA + L-cysteinyl-[protein] + A + AMP + diphosphate + H(+). Functionally, catalyzes the 2-thiolation of uridine at the wobble position (U34) of tRNA, leading to the formation of s(2)U34. The sequence is that of tRNA-specific 2-thiouridylase MnmA from Xylella fastidiosa (strain M23).